Here is a 100-residue protein sequence, read N- to C-terminus: Integration host factor subunit alpha (100 aa).

Residues 53–72 (FQLRDKPQRPGRNPKTGEEV) are disordered.

Belongs to the bacterial histone-like protein family. In terms of assembly, heterodimer of an alpha and a beta chain.

Functionally, this protein is one of the two subunits of integration host factor, a specific DNA-binding protein that functions in genetic recombination as well as in transcriptional and translational control. The chain is Integration host factor subunit alpha from Neisseria meningitidis serogroup C (strain 053442).